A 339-amino-acid chain; its full sequence is Protein RecA (339 aa).

Residue 66–73 participates in ATP binding; it reads GPESSGKT.

Belongs to the RecA family.

The protein localises to the cytoplasm. In terms of biological role, can catalyze the hydrolysis of ATP in the presence of single-stranded DNA, the ATP-dependent uptake of single-stranded DNA by duplex DNA, and the ATP-dependent hybridization of homologous single-stranded DNAs. It interacts with LexA causing its activation and leading to its autocatalytic cleavage. This chain is Protein RecA, found in Geobacter metallireducens (strain ATCC 53774 / DSM 7210 / GS-15).